Consider the following 365-residue polypeptide: Caffeic acid 3-O-methyltransferase 1 (365 aa).

Methionine 130 to leucine 136 lines the substrate pocket. Positions alanine 162–methionine 180 are substrate binding. Residues glycine 208, aspartate 231, aspartate 251, methionine 252, and lysine 265 each contribute to the S-adenosyl-L-methionine site. Histidine 269 (proton acceptor) is an active-site residue.

Belongs to the class I-like SAM-binding methyltransferase superfamily. Cation-independent O-methyltransferase family. COMT subfamily. In terms of assembly, homodimer. In terms of processing, the N-terminus is blocked. Xylem.

It carries out the reaction (E)-caffeate + S-adenosyl-L-methionine = (E)-ferulate + S-adenosyl-L-homocysteine + H(+). It participates in aromatic compound metabolism; phenylpropanoid biosynthesis. In terms of biological role, catalyzes the conversion of caffeic acid to ferulic acid and of 5-hydroxyferulic acid to sinapic acid. The resulting products may subsequently be converted to the corresponding alcohols that are incorporated into lignins. This is Caffeic acid 3-O-methyltransferase 1 (OMT1) from Populus tremuloides (Quaking aspen).